The primary structure comprises 59 residues: MPFLVGLSPPFLYFELIGHFQVEPSPTPTIKGRKWWRLSLFLIFWGERRVKKETKANDC.

Residues 7-23 form a helical membrane-spanning segment; sequence LSPPFLYFELIGHFQVE.

The protein belongs to the ATPase protein 8 family. As to quaternary structure, F-type ATPases have 2 components, CF(1) - the catalytic core - and CF(0) - the membrane proton channel.

It localises to the mitochondrion membrane. Functionally, mitochondrial membrane ATP synthase (F(1)F(0) ATP synthase or Complex V) produces ATP from ADP in the presence of a proton gradient across the membrane which is generated by electron transport complexes of the respiratory chain. F-type ATPases consist of two structural domains, F(1) - containing the extramembraneous catalytic core and F(0) - containing the membrane proton channel, linked together by a central stalk and a peripheral stalk. During catalysis, ATP synthesis in the catalytic domain of F(1) is coupled via a rotary mechanism of the central stalk subunits to proton translocation. Part of the complex F(0) domain. Minor subunit located with subunit a in the membrane. This chain is ATP synthase protein 8 (MT-ATP8), found in Oenothera berteroana (Bertero's evening primrose).